The sequence spans 372 residues: Queuine tRNA-ribosyltransferase (372 aa).

Aspartate 89 (proton acceptor) is an active-site residue. Substrate contacts are provided by residues 89 to 93 (DSGGF), aspartate 161, and glycine 232. The tract at residues 262-268 (GIGDLPS) is RNA binding. Aspartate 281 acts as the Nucleophile in catalysis. Residues 286 to 290 (TKAAR) form an RNA binding; important for wobble base 34 recognition region. Cysteine 319, cysteine 321, cysteine 324, and histidine 351 together coordinate Zn(2+).

It belongs to the queuine tRNA-ribosyltransferase family. In terms of assembly, homodimer. Within each dimer, one monomer is responsible for RNA recognition and catalysis, while the other monomer binds to the replacement base PreQ1. Zn(2+) serves as cofactor.

It carries out the reaction 7-aminomethyl-7-carbaguanine + guanosine(34) in tRNA = 7-aminomethyl-7-carbaguanosine(34) in tRNA + guanine. The protein operates within tRNA modification; tRNA-queuosine biosynthesis. Its function is as follows. Catalyzes the base-exchange of a guanine (G) residue with the queuine precursor 7-aminomethyl-7-deazaguanine (PreQ1) at position 34 (anticodon wobble position) in tRNAs with GU(N) anticodons (tRNA-Asp, -Asn, -His and -Tyr). Catalysis occurs through a double-displacement mechanism. The nucleophile active site attacks the C1' of nucleotide 34 to detach the guanine base from the RNA, forming a covalent enzyme-RNA intermediate. The proton acceptor active site deprotonates the incoming PreQ1, allowing a nucleophilic attack on the C1' of the ribose to form the product. After dissociation, two additional enzymatic reactions on the tRNA convert PreQ1 to queuine (Q), resulting in the hypermodified nucleoside queuosine (7-(((4,5-cis-dihydroxy-2-cyclopenten-1-yl)amino)methyl)-7-deazaguanosine). This chain is Queuine tRNA-ribosyltransferase, found in Chlamydia trachomatis serovar L2 (strain ATCC VR-902B / DSM 19102 / 434/Bu).